Reading from the N-terminus, the 280-residue chain is 4-diphosphocytidyl-2-C-methyl-D-erythritol kinase (280 aa).

Lys8 is an active-site residue. 91–101 (PVAAGLAGGST) is a binding site for ATP. Asp133 is a catalytic residue.

The protein belongs to the GHMP kinase family. IspE subfamily.

The enzyme catalyses 4-CDP-2-C-methyl-D-erythritol + ATP = 4-CDP-2-C-methyl-D-erythritol 2-phosphate + ADP + H(+). The protein operates within isoprenoid biosynthesis; isopentenyl diphosphate biosynthesis via DXP pathway; isopentenyl diphosphate from 1-deoxy-D-xylulose 5-phosphate: step 3/6. Its function is as follows. Catalyzes the phosphorylation of the position 2 hydroxy group of 4-diphosphocytidyl-2C-methyl-D-erythritol. This Clostridium botulinum (strain 657 / Type Ba4) protein is 4-diphosphocytidyl-2-C-methyl-D-erythritol kinase.